The primary structure comprises 386 residues: Delta(7)-sterol 5(6)-desaturase ERG3 (386 aa).

3 helical membrane-spanning segments follow: residues 120 to 140 (LSLF…VAYL), 172 to 192 (IPVM…GYSF), and 206 to 226 (AILW…YFLH). A Fatty acid hydroxylase domain is found at 214–337 (FILFTDCGIY…FTTLWDRLGN (124 aa)). The short motif at 226–230 (HRWLH) is the Histidine box-1 element. The Histidine box-2 motif lies at 239-243 (HKPHH). Residues 272–292 (PLLFPLHKVLYLFLFTFVNFW) traverse the membrane as a helical segment. The short motif at 314 to 318 (HTVHH) is the Histidine box-3 element.

It belongs to the sterol desaturase family. It depends on Fe cation as a cofactor.

Its subcellular location is the endoplasmic reticulum membrane. The enzyme catalyses a Delta(7)-sterol + 2 Fe(II)-[cytochrome b5] + O2 + 2 H(+) = a Delta(5),Delta(7)-sterol + 2 Fe(III)-[cytochrome b5] + 2 H2O. It participates in steroid metabolism; ergosterol biosynthesis; ergosterol from zymosterol: step 3/5. Functionally, C-5 sterol desaturase; part of the third module of ergosterol biosynthesis pathway that includes the late steps of the pathwa. ERG3 catalyzes the introduction of a C-5 double bond in the B ring to produce 5-dehydroepisterol. The third module or late pathway involves the ergosterol synthesis itself through consecutive reactions that mainly occur in the endoplasmic reticulum (ER) membrane. Firstly, the squalene synthase ERG9 catalyzes the condensation of 2 farnesyl pyrophosphate moieties to form squalene, which is the precursor of all steroids. Squalene synthase is crucial for balancing the incorporation of farnesyl diphosphate (FPP) into sterol and nonsterol isoprene synthesis. Secondly, the squalene epoxidase ERG1 catalyzes the stereospecific oxidation of squalene to (S)-2,3-epoxysqualene, which is considered to be a rate-limiting enzyme in steroid biosynthesis. Then, the lanosterol synthase ERG7 catalyzes the cyclization of (S)-2,3 oxidosqualene to lanosterol, a reaction that forms the sterol core. In the next steps, lanosterol is transformed to zymosterol through a complex process involving various demethylation, reduction and desaturation reactions. The lanosterol 14-alpha-demethylase ERG11 (also known as CYP51) catalyzes C14-demethylation of lanosterol to produce 4,4'-dimethyl cholesta-8,14,24-triene-3-beta-ol, which is critical for ergosterol biosynthesis. The C-14 reductase ERG24 reduces the C14=C15 double bond of 4,4-dimethyl-cholesta-8,14,24-trienol to produce 4,4-dimethyl-cholesta-8,24-dienol. 4,4-dimethyl-cholesta-8,24-dienol is substrate of the C-4 demethylation complex ERG25-ERG26-ERG27 in which ERG25 catalyzes the three-step monooxygenation required for the demethylation of 4,4-dimethyl and 4alpha-methylsterols, ERG26 catalyzes the oxidative decarboxylation that results in a reduction of the 3-beta-hydroxy group at the C-3 carbon to an oxo group, and ERG27 is responsible for the reduction of the keto group on the C-3. ERG28 has a role as a scaffold to help anchor ERG25, ERG26 and ERG27 to the endoplasmic reticulum and ERG29 regulates the activity of the iron-containing C4-methylsterol oxidase ERG25. Then, the sterol 24-C-methyltransferase ERG6 catalyzes the methyl transfer from S-adenosyl-methionine to the C-24 of zymosterol to form fecosterol. The C-8 sterol isomerase ERG2 catalyzes the reaction which results in unsaturation at C-7 in the B ring of sterols and thus converts fecosterol to episterol. The sterol-C5-desaturase ERG3 then catalyzes the introduction of a C-5 double bond in the B ring to produce 5-dehydroepisterol. The C-22 sterol desaturase ERG5 further converts 5-dehydroepisterol into ergosta-5,7,22,24(28)-tetraen-3beta-ol by forming the C-22(23) double bond in the sterol side chain. Finally, ergosta-5,7,22,24(28)-tetraen-3beta-ol is substrate of the C-24(28) sterol reductase ERG4 to produce ergosterol. The sequence is that of Delta(7)-sterol 5(6)-desaturase ERG3 from Candida albicans (strain SC5314 / ATCC MYA-2876) (Yeast).